The following is a 390-amino-acid chain: uncharacterized protein (390 aa).

It belongs to the peptidase M24 family.

This is an uncharacterized protein from Sinorhizobium fredii (strain NBRC 101917 / NGR234).